Here is a 197-residue protein sequence, read N- to C-terminus: METAQPPISYAPPKRGAVCAYVRTVVTTTTVSDSGGNNEDRLTQIVAQLQRTRLNFSKLSQLQRRRVRNMQKLIRKKNSVIANLAARLTTQKKTKHFAVTIRKNVIHTTSGSEQFVRQRVLELCANGGEQVFCARRADCARDRRRVAEALATALGAGVVASAANKRFEIEDEEKLVSAKLIVQQVLHDGDHSDTCAD.

Its function is as follows. This protein is required for viral late gene expression. In Orgyia pseudotsugata (Douglas-fir tussock moth), this protein is Putative early 21.8 kDa protein (DA26).